Reading from the N-terminus, the 356-residue chain is GTPase Obg (356 aa).

The region spanning 1-159 is the Obg domain; sequence MKFLDQAKVY…RWIWLRLKLI (159 aa). Residues 160–328 form the OBG-type G domain; that stretch reads ADAGLVGLPN…ALYAIAQHLG (169 aa). GTP contacts are provided by residues 166 to 173, 191 to 195, 213 to 216, 280 to 283, and 309 to 311; these read GLPNAGKS, FTTLH, DIPG, NKID, and SGV. Mg(2+) contacts are provided by Ser173 and Thr193. A disordered region spans residues 333–356; that stretch reads DIPLPKPSNADEEDPDTDQPWSPV.

Belongs to the TRAFAC class OBG-HflX-like GTPase superfamily. OBG GTPase family. As to quaternary structure, monomer. Requires Mg(2+) as cofactor.

It localises to the cytoplasm. Its function is as follows. An essential GTPase which binds GTP, GDP and possibly (p)ppGpp with moderate affinity, with high nucleotide exchange rates and a fairly low GTP hydrolysis rate. Plays a role in control of the cell cycle, stress response, ribosome biogenesis and in those bacteria that undergo differentiation, in morphogenesis control. The protein is GTPase Obg of Hyphomonas neptunium (strain ATCC 15444).